Consider the following 122-residue polypeptide: Fluoride-specific ion channel FluC (122 aa).

4 consecutive transmembrane segments (helical) span residues 6–26 (LVVG…INLV), 33–53 (SISL…GLLF), 60–80 (GLSP…FTTF), and 101–121 (LNII…FIIF). Residues Gly-75 and Thr-78 each coordinate Na(+).

This sequence belongs to the fluoride channel Fluc/FEX (TC 1.A.43) family.

It is found in the cell inner membrane. It carries out the reaction fluoride(in) = fluoride(out). Its activity is regulated as follows. Na(+) is not transported, but it plays an essential structural role and its presence is essential for fluoride channel function. Functionally, fluoride-specific ion channel. Important for reducing fluoride concentration in the cell, thus reducing its toxicity. The chain is Fluoride-specific ion channel FluC from Campylobacter jejuni subsp. jejuni serotype O:6 (strain 81116 / NCTC 11828).